The primary structure comprises 24 residues: Formate ester dehydrogenase gamma chain (24 aa).

As to quaternary structure, heterotrimer composed of an alpha, a beta and a gamma chain.

The chain is Formate ester dehydrogenase gamma chain from Amycolatopsis methanolica.